The following is a 164-amino-acid chain: UPF0304 protein YfbU (164 aa).

It belongs to the UPF0304 family.

This Salmonella choleraesuis (strain SC-B67) protein is UPF0304 protein YfbU.